Reading from the N-terminus, the 642-residue chain is Medium-chain-fatty-acid--[acyl-carrier-protein] ligase TtuA (642 aa).

The protein belongs to the ATP-dependent AMP-binding enzyme family.

The catalysed reaction is a medium-chain fatty acid + holo-[ACP] + ATP = a medium-chain fatty acyl-[ACP] + AMP + diphosphate. It catalyses the reaction a medium-chain fatty acid + ATP + H(+) = a medium-chain fatty acyl-AMP + diphosphate. It carries out the reaction a medium-chain fatty acyl-AMP + holo-[ACP] = a medium-chain fatty acyl-[ACP] + AMP + H(+). The enzyme catalyses decanoate + holo-[ACP] + ATP = decanoyl-[ACP] + AMP + diphosphate. The catalysed reaction is decanoate + ATP + H(+) = decanoyl-AMP + diphosphate. It catalyses the reaction decanoyl-AMP + holo-[ACP] = decanoyl-[ACP] + AMP + H(+). In terms of biological role, ligase likely involved in the biosynthesis of a polyyne metabolite. Catalyzes the activation of decanoic acid, followed by the loading of the activated decanoic acid onto the acyl carrier protein TtuC. Decanoic acid is the preferred substrate, but it can also use 10-undecenoic acid and lauric acid. Nonanoic acid and 7-octenoic acid are only weakly activated. The protein is Medium-chain-fatty-acid--[acyl-carrier-protein] ligase TtuA of Teredinibacter turnerae (strain ATCC 39867 / T7901).